Here is a 408-residue protein sequence, read N- to C-terminus: MITALRGMKDMLPARAKLYAQIIKTCEEVAKNYGYEQILTPHLEETALFKRSVGESSDIVGKEMYQFEDKGGNDVCLRPEGTAGVVRAFIEAKLDRANVTKRCFYHGSMFRYERPQKGRLREFHQFGCECFGEGSVYEDASIILMVSEIFNRLNIKTTLKINSLGDESSMKSYKEKLVKFLDENDDKICEDCKRRKLLNPIRVLDCKIESCQEIYKNAPVITDSLSDEAQADFAKLQEILTANGVKFEIDTKLVRGLDYYCKTAFEFISNEIGSQSAVAGGGRYDRLVEYLGGRASYGVGFAMGVERIMEILGEAGDERDGVYLCALDAANVDFIYNLGSKLRKKYQVEISYEAKKLQKHLQNADNKNAKIFLCVGENEMKENKIWYKNLETKDEKTINLDELEKELG.

It belongs to the class-II aminoacyl-tRNA synthetase family. As to quaternary structure, homodimer.

Its subcellular location is the cytoplasm. The catalysed reaction is tRNA(His) + L-histidine + ATP = L-histidyl-tRNA(His) + AMP + diphosphate + H(+). The protein is Histidine--tRNA ligase of Campylobacter concisus (strain 13826).